Consider the following 769-residue polypeptide: Serine/threonine-protein kinase PLK4 (769 aa).

The 254-residue stretch at 14-267 (YEVQHLLGKG…LEAVLCHPFM (254 aa)) folds into the Protein kinase domain. ATP contacts are provided by residues 20–28 (LGKGGFATV) and Lys-43. Asp-138 functions as the Proton acceptor in the catalytic mechanism. A Cryptic POLO box 1 (CPB1) domain is found at 381 to 498 (EDRISVPPLN…ARFVGLVKSK (118 aa)). Positions 499–602 (TPKVTYFSTL…GRRPITDVQP (104 aa)) constitute a Cryptic POLO box 2 (CPB2) domain. The region spanning 660–739 (PIKRINVPDI…IPNIQLKLKT (80 aa)) is the POLO box domain.

The protein belongs to the protein kinase superfamily. Ser/Thr protein kinase family. CDC5/Polo subfamily. In terms of assembly, homodimer. In terms of processing, ubiquitinated by the SCF(Slimb) ubiquitin ligase complex; leading to its degradation by the proteasome during interphase and regulating centriole number and ensuring the block to centriole reduplication.

The protein resides in the cytoplasm. The protein localises to the cytoskeleton. It localises to the microtubule organizing center. Its subcellular location is the centrosome. It is found in the centriole. The enzyme catalyses L-seryl-[protein] + ATP = O-phospho-L-seryl-[protein] + ADP + H(+). The catalysed reaction is L-threonyl-[protein] + ATP = O-phospho-L-threonyl-[protein] + ADP + H(+). Functionally, serine/threonine-protein kinase that plays a central role in centriole duplication. Able to trigger procentriole formation on the surface of the mother centriole cylinder, using mother centriole as a platform, leading to the recruitment of centriole biogenesis proteins such as sas-6. When overexpressed, it is able to induce centrosome amplification through the simultaneous generation of multiple procentrioles adjoining each parental centriole during S phase. Centrosome amplification following overexpression can initiate tumorigenesis, highlighting the importance of centrosome regulation in cancers. This chain is Serine/threonine-protein kinase PLK4 (SAK), found in Drosophila simulans (Fruit fly).